The primary structure comprises 375 residues: Chaperone protein DnaJ (375 aa).

The region spanning 4-68 (DYYEILGVSR…ETRARYDRFG (65 aa)) is the J domain. Residues 134 to 216 (GGEKEIRIRH…CGGSGRKQET (83 aa)) form a CR-type zinc finger. Positions 147, 150, 164, 167, 190, 193, 204, and 207 each coordinate Zn(2+). 4 CXXCXGXG motif repeats span residues 147 to 154 (CQVCEGSG), 164 to 171 (CSTCSGSG), 190 to 197 (CPTCNGSG), and 204 to 211 (CEACGGSG).

Belongs to the DnaJ family. Homodimer. The cofactor is Zn(2+).

The protein resides in the cytoplasm. Participates actively in the response to hyperosmotic and heat shock by preventing the aggregation of stress-denatured proteins and by disaggregating proteins, also in an autonomous, DnaK-independent fashion. Unfolded proteins bind initially to DnaJ; upon interaction with the DnaJ-bound protein, DnaK hydrolyzes its bound ATP, resulting in the formation of a stable complex. GrpE releases ADP from DnaK; ATP binding to DnaK triggers the release of the substrate protein, thus completing the reaction cycle. Several rounds of ATP-dependent interactions between DnaJ, DnaK and GrpE are required for fully efficient folding. Also involved, together with DnaK and GrpE, in the DNA replication of plasmids through activation of initiation proteins. In Gloeothece citriformis (strain PCC 7424) (Cyanothece sp. (strain PCC 7424)), this protein is Chaperone protein DnaJ.